Consider the following 210-residue polypeptide: T-cell surface glycoprotein CD8 beta-2 chain (210 aa).

The N-terminal stretch at 1 to 18 (MRPRLWLLLAAQLTVLHG) is a signal peptide. One can recognise an Ig-like V-type domain in the interval 19 to 132 (NSVLQQTPAY…ELTFGKGTQL (114 aa)). At 19-170 (NSVLQQTPAY…ETQKGPLCSP (152 aa)) the chain is on the extracellular side. The cysteines at positions 41 and 116 are disulfide-linked. Residue asparagine 102 is glycosylated (N-linked (GlcNAc...) asparagine). Residues 171 to 191 (VTLGLLVAGVLVLLVSLGVAM) form a helical membrane-spanning segment. Topologically, residues 192–210 (HLCCRRRRARLRFMKQFYK) are cytoplasmic.

In terms of assembly, in general heterodimer of an alpha and a beta chain linked by two disulfide bonds.

It is found in the cell membrane. In terms of biological role, identifies cytotoxic/suppressor T-cells that interact with MHC class I bearing targets. CD8 is thought to play a role in the process of T-cell mediated killing. The polypeptide is T-cell surface glycoprotein CD8 beta-2 chain (Homo sapiens (Human)).